We begin with the raw amino-acid sequence, 177 residues long: Ribosome rescue factor SmrB (177 aa).

The Smr domain occupies 98 to 173 (LDMHGMKQDE…GAGAILVLLS (76 aa)).

This sequence belongs to the SmrB family. Associates with collided ribosomes, but not with correctly translating polysomes.

Its function is as follows. Acts as a ribosome collision sensor. Detects stalled/collided disomes (pairs of ribosomes where the leading ribosome is stalled and a second ribosome has collided with it) and endonucleolytically cleaves mRNA at the 5' boundary of the stalled ribosome. Stalled/collided disomes form a new interface (primarily via the 30S subunits) that binds SmrB. Cleaved mRNA becomes available for tmRNA ligation, leading to ribosomal subunit dissociation and rescue of stalled ribosomes. This Aliivibrio fischeri (strain ATCC 700601 / ES114) (Vibrio fischeri) protein is Ribosome rescue factor SmrB.